Reading from the N-terminus, the 604-residue chain is MDVRRRSEEAVYSSKVFAADEKPLKPHKQQQEEDNTLLIDASDALPLPLYFTNGLFFTMFFSVMYFLLSRWREKIRNSTPLHVVTLSELGAIVSLIASVIYLLGFFGIGFVQTFVARGNNDSWDEEDENDEQFILEEDSRRGPCAAATTLGCAVPTPPAKHIAPIVPQQPAVSIAEKPAPLVTPAASEEDEEIIKSVVQGKIPSYSLESKLGDCKRAASIRKEVLQRITGKSLEGLPLDGFNYESILGQCCEMTIGYVQIPVGIAGPLLLNGREYSVPMATTEGCLVASTNRGCKAIYASGGATSILLRDGMTRAPCVRFGTAKRAAELKFFVEDPINFETLANVFNQSSRFARLQRIQCAIAGKNLHMRFVCSTGDAMGMNMVSKGVQNVLDYLQNEYADMDVIGISANFCSDKKPAAVNWIEGRGKSVVCEAIITEEVVKKVLKTEVAALVELNMLKNLTGSALAGALGGFNAHASNIVSAVYIATGQDPAQNIESSHCITMMEAVNDGKDLHISVTMPSIEVGTVGGGTQLASQSACLNLLGVKGANREAPGSNARLLATIVAGSVLAGELSLMSAISAGQLVNSHMKYNRSTKDVTKASS.

A run of 2 helical transmembrane segments spans residues 47–67 (LPLYFTNGLFFTMFFSVMYFL) and 91–111 (AIVSLIASVIYLLGFFGIGFV). Residues 112–188 (QTFVARGNND…APLVTPAASE (77 aa)) are linker. Residue Asn-120 is glycosylated (N-linked (GlcNAc...) asparagine). Residues 189–604 (EDEEIIKSVV…STKDVTKASS (416 aa)) are catalytic. Glu-283 (charge relay system) is an active-site residue. N-linked (GlcNAc...) asparagine glycosylation is present at Asn-347. The active-site Charge relay system is Lys-415. Asn-460 is a glycosylation site (N-linked (GlcNAc...) asparagine). Asp-491 functions as the Charge relay system in the catalytic mechanism. His-589 serves as the catalytic Proton donor. N-linked (GlcNAc...) asparagine glycosylation is present at Asn-593.

The protein belongs to the HMG-CoA reductase family.

It localises to the endoplasmic reticulum membrane. It catalyses the reaction (R)-mevalonate + 2 NADP(+) + CoA = (3S)-3-hydroxy-3-methylglutaryl-CoA + 2 NADPH + 2 H(+). It participates in metabolic intermediate biosynthesis; (R)-mevalonate biosynthesis; (R)-mevalonate from acetyl-CoA: step 3/3. In terms of biological role, catalyzes the synthesis of mevalonate. The specific precursor of all isoprenoid compounds present in plants. The protein is 3-hydroxy-3-methylglutaryl-coenzyme A reductase 2 (HMGR2) of Capsicum annuum (Capsicum pepper).